Reading from the N-terminus, the 872-residue chain is Alanine--tRNA ligase (872 aa).

Zn(2+)-binding residues include H567, H571, C669, and H673.

Belongs to the class-II aminoacyl-tRNA synthetase family. The cofactor is Zn(2+).

Its subcellular location is the cytoplasm. It catalyses the reaction tRNA(Ala) + L-alanine + ATP = L-alanyl-tRNA(Ala) + AMP + diphosphate. Functionally, catalyzes the attachment of alanine to tRNA(Ala) in a two-step reaction: alanine is first activated by ATP to form Ala-AMP and then transferred to the acceptor end of tRNA(Ala). Also edits incorrectly charged Ser-tRNA(Ala) and Gly-tRNA(Ala) via its editing domain. The protein is Alanine--tRNA ligase of Streptococcus pyogenes serotype M4 (strain MGAS10750).